The sequence spans 86 residues: Cell division topological specificity factor (86 aa).

It belongs to the MinE family.

Its function is as follows. Prevents the cell division inhibition by proteins MinC and MinD at internal division sites while permitting inhibition at polar sites. This ensures cell division at the proper site by restricting the formation of a division septum at the midpoint of the long axis of the cell. The protein is Cell division topological specificity factor of Albidiferax ferrireducens (strain ATCC BAA-621 / DSM 15236 / T118) (Rhodoferax ferrireducens).